The chain runs to 385 residues: 1-deoxy-D-xylulose 5-phosphate reductoisomerase (385 aa).

The NADPH site is built by T10, G11, S12, I13, G36, N38, and N121. K122 is a 1-deoxy-D-xylulose 5-phosphate binding site. NADPH is bound at residue E123. Position 147 (D147) interacts with Mn(2+). 1-deoxy-D-xylulose 5-phosphate contacts are provided by S148, E149, S173, and H196. E149 lines the Mn(2+) pocket. G202 provides a ligand contact to NADPH. Residues S209, N214, K215, and E218 each coordinate 1-deoxy-D-xylulose 5-phosphate. Position 218 (E218) interacts with Mn(2+).

Belongs to the DXR family. Mg(2+) serves as cofactor. Mn(2+) is required as a cofactor.

The catalysed reaction is 2-C-methyl-D-erythritol 4-phosphate + NADP(+) = 1-deoxy-D-xylulose 5-phosphate + NADPH + H(+). It functions in the pathway isoprenoid biosynthesis; isopentenyl diphosphate biosynthesis via DXP pathway; isopentenyl diphosphate from 1-deoxy-D-xylulose 5-phosphate: step 1/6. Catalyzes the NADPH-dependent rearrangement and reduction of 1-deoxy-D-xylulose-5-phosphate (DXP) to 2-C-methyl-D-erythritol 4-phosphate (MEP). In Exiguobacterium sp. (strain ATCC BAA-1283 / AT1b), this protein is 1-deoxy-D-xylulose 5-phosphate reductoisomerase.